The following is a 1111-amino-acid chain: Isoleucine--tRNA ligase (1111 aa).

The 'HIGH' region signature appears at 52–62 (PFANGLPHYGH). Residues 645-649 (KLSKR) carry the 'KMSKS' region motif. Lys-648 provides a ligand contact to ATP.

The protein belongs to the class-I aminoacyl-tRNA synthetase family. IleS type 2 subfamily. As to quaternary structure, monomer. Requires Zn(2+) as cofactor.

Its subcellular location is the cytoplasm. The catalysed reaction is tRNA(Ile) + L-isoleucine + ATP = L-isoleucyl-tRNA(Ile) + AMP + diphosphate. Functionally, catalyzes the attachment of isoleucine to tRNA(Ile). As IleRS can inadvertently accommodate and process structurally similar amino acids such as valine, to avoid such errors it has two additional distinct tRNA(Ile)-dependent editing activities. One activity is designated as 'pretransfer' editing and involves the hydrolysis of activated Val-AMP. The other activity is designated 'posttransfer' editing and involves deacylation of mischarged Val-tRNA(Ile). The polypeptide is Isoleucine--tRNA ligase (Wolbachia pipientis wMel).